Reading from the N-terminus, the 292-residue chain is N-acetylneuraminate lyase (292 aa).

The aceneuramate site is built by Ser47 and Thr48. The active-site Proton donor is Tyr136. The active-site Schiff-base intermediate with substrate is Lys164. 5 residues coordinate aceneuramate: Thr166, Gly188, Asp190, Glu191, and Ser207.

The protein belongs to the DapA family. NanA subfamily. As to quaternary structure, homotetramer.

It is found in the cytoplasm. The catalysed reaction is aceneuramate = aldehydo-N-acetyl-D-mannosamine + pyruvate. Its pathway is amino-sugar metabolism; N-acetylneuraminate degradation; D-fructose 6-phosphate from N-acetylneuraminate: step 1/5. In terms of biological role, catalyzes the reversible aldol cleavage of N-acetylneuraminic acid (sialic acid; Neu5Ac) to form pyruvate and N-acetylmannosamine (ManNAc) via a Schiff base intermediate. The protein is N-acetylneuraminate lyase of Actinobacillus pleuropneumoniae serotype 5b (strain L20).